Reading from the N-terminus, the 612-residue chain is E3 ubiquitin-protein ligase synoviolin (612 aa).

The Cytoplasmic portion of the chain corresponds to 1–4; it reads MFRT. The tract at residues 1-251 is involved in FAM8A1 interaction; the sequence is MFRTAVMMAA…LFAIRPMYLA (251 aa). Residues 5-25 traverse the membrane as a helical segment; it reads AVMMAASLALTGAVVAHAYYL. Residues 21–42 are interaction with SEL1L; the sequence is HAYYLKHQFYPTVVYLTKSSPS. Residues 26-41 lie on the Lumenal side of the membrane; that stretch reads KHQFYPTVVYLTKSSP. A helical membrane pass occupies residues 42-62; the sequence is SMAVLYIQAFVLVFLLGKVMG. The Cytoplasmic segment spans residues 63–98; that stretch reads KVFFGQLRAAEMEHLLERSWYAVTETCLAFTVFRDD. A helical transmembrane segment spans residues 99-119; that stretch reads FSPRFVALFTLLLFLKCFHWL. At 120-140 the chain is on the lumenal side; the sequence is AEDRVDFMERSPNISWLFHCR. A helical transmembrane segment spans residues 141–161; the sequence is IVSLMFLLGILDFLFVSHAYH. Over 162-169 the chain is Cytoplasmic; it reads SILTRGAS. Residues 170-190 traverse the membrane as a helical segment; sequence VQLVFGFEYAILMTMVLTIFI. At 191–224 the chain is on the lumenal side; sequence KYVLHSVDLQSENPWDNKAVYMLYTELFTGFIKV. A helical transmembrane segment spans residues 225–245; sequence LLYMAFMTIMIKVHTFPLFAI. An interaction with p53/TP53 region spans residues 236-270; the sequence is KVHTFPLFAIRPMYLAMRQFKKAVTDAIMSRRAIR. The Cytoplasmic portion of the chain corresponds to 246–612; sequence RPMYLAMRQF…LQKLESPVAH (367 aa). Zn(2+) is bound by residues cysteine 291, cysteine 294, cysteine 307, histidine 309, histidine 312, cysteine 315, cysteine 326, and cysteine 329. The segment at 291–330 adopts an RING-type; atypical zinc-finger fold; it reads CIICREEMVTGAKRLPCNHIFHTSCLRSWFQRQQTCPTCR. Disordered stretches follow at residues 337-375 and 393-449; these read SLPA…GLLP and PVPP…PGFP. Pro residues-rich tracts occupy residues 341 to 375 and 393 to 409; these read QSPP…GLLP and PVPP…PPPT. Over residues 416–434 the composition is skewed to low complexity; it reads PSGAATTTAAGTSTSAPAP. Positions 435–449 are enriched in pro residues; sequence GSVPGPEAGPAPGFP. Residues 474–529 are HAF-H domain; necessary to form higher-order Hrd1 complexes; it reads GFAGLTPEELRALEGHERQHLEARLQSLRNIHTLLDAAMLQINQYLTVLASLGPPR. The interval 530-612 is disordered; that stretch reads PATSVNPTEE…LQKLESPVAH (83 aa). Over residues 539–559 the composition is skewed to low complexity; it reads ETASTVVSAAPSTSAPSSEAP. A compositionally biased stretch (pro residues) spans 560 to 570; sequence TPSPGASPPIP. The segment covering 586–595 has biased composition (acidic residues); sequence ELPEDGEPDA. Serine 608 bears the Phosphoserine mark.

Belongs to the HRD1 family. Homodimer. Interacts with p53/TP53. Interacts with HTT. Component of the HRD1 complex, which comprises at least SYNV1/HRD1, DERL1/2, FAM8A1, HERPUD1/HERP, OS9, SEL1L and UBE2J1. FAM8A1 is stabilized by interaction with SYNV1, which prevents its proteasomal degradation. OS9 and UBE2J1 recruitment to the complex may be mediated by SEL1L. SYNV1 assembles with SEL1L and FAM8A1 through its transmembrane domains, but interaction with its cytoplasmic domain is required to confer stability to FAM8A1 and enhance recruitment of HERPUD1. The HRD1 complex also associates with VIMP and may transfer misfolded proteins from the endoplasmic reticulum to VCP. May form a complex with ERLEC1; HSPA5; OS9 and SEL1L. Interacts with VCP. Interacts with UBXN6. Interacts with BAG6. Interacts with NFE2L1. Interacts (via N-terminus) with components of the pre-B cell receptor, including IGLL1 and VPREB1A. Interacts with CREB3L3; this interaction leads to CREB3L3 ubiquitination and proteasomal degradation. Post-translationally, auto-ubiquitinated. Deubiquitinated by USP19. In terms of tissue distribution, widely expressed, with highest levels in bone, spleen, lung and testis. In the brain, present in neurons but not in glial cells. Up-regulated in synovial tissues from mice with collagen-induced arthritis (at protein level). Expressed in the liver.

It localises to the endoplasmic reticulum membrane. It catalyses the reaction S-ubiquitinyl-[E2 ubiquitin-conjugating enzyme]-L-cysteine + [acceptor protein]-L-lysine = [E2 ubiquitin-conjugating enzyme]-L-cysteine + N(6)-ubiquitinyl-[acceptor protein]-L-lysine.. Its pathway is protein modification; protein ubiquitination. Functionally, E3 ubiquitin-protein ligase which accepts ubiquitin specifically from endoplasmic reticulum-associated UBC7 E2 ligase and transfers it to substrates, promoting their degradation. Component of the endoplasmic reticulum quality control (ERQC) system also called ER-associated degradation (ERAD) involved in ubiquitin-dependent degradation of misfolded endoplasmic reticulum proteins. Also promotes the degradation of normal but naturally short-lived proteins such as SGK. Protects cells from ER stress-induced apoptosis. Sequesters p53/TP53 in the cytoplasm and promotes its degradation, thereby negatively regulating its biological function in transcription, cell cycle regulation and apoptosis. Required for embryogenesis. Mediates the ubiquitination and subsequent degradation of cytoplasmic NFE2L1. During the early stage of B cell development, required for degradation of the pre-B cell receptor (pre-BCR) complex, hence supporting further differentiation into mature B cells. The sequence is that of E3 ubiquitin-protein ligase synoviolin (Syvn1) from Mus musculus (Mouse).